We begin with the raw amino-acid sequence, 808 residues long: MLEGHESYDTENFYFREIRKNLQEVDFQWKDGEINYKEGPMTHKNNLTGQRVRHSQGDVENKHMENQLILRFQSGLGELQKFQTAEKIYGCNQIERTVNNCFLASPLQRIFPGVQTNISRKYGNDFLQLSLPTQDEKTHIREKPYIGNECGKAFRVSSSLINHQMIHTTEKPYRCNESGKAFHRGSLLTVHQIVHTRGKPYQCDVCGRIFRQNSDLVNHRRSHTGDKPYICNECGKSFSKSSHLAVHQRIHTGEKPYKCNRCGKCFSQSSSLATHQTVHTGDKPYKCNECGKTFKRNSSLTAHHIIHAGKKPYTCDVCGKVFYQNSQLVRHQIIHTGETPYKCNECGKVFFQRSRLAGHRRIHTGEKPYKCNECGKVFSQHSHLAVHQRVHTGEKPYKCNECGKAFNWGSLLTVHQRIHTGEKPYKCNVCGKVFNYGGYLSVHMRCHTGEKPLHCNKCGMVFTYYSCLARHQRMHTGEKPYKCNVCGKVFIDSGNLSIHRRSHTGEKPFQCNECGKVFSYYSCLARHRKIHTGEKPYKCNDCGKAYTQRSSLTKHLVIHTGENPYHCNEFGEAFIQSSKLARYHRNPTGEKPHKCSECGRTFSHKTSLVYHQRRHTGEMPYKCIECGKVFNSTTTLARHRRIHTGEKPYKCNECGKVFRYRSGLARHWSIHTGEKPYKCNECGKAFRVRSILLNHQMMHTGEKPYKCNECGKAFIERSNLVYHQRNHTGEKPYKCMECGKAFGRRSCLTKHQRIHSSEKPYKCNECGKSYISRSGLTKHQIKHAGENLTTKLNVERPLDVVLTSGIPK.

Residue lysine 137 forms a Glycyl lysine isopeptide (Lys-Gly) (interchain with G-Cter in SUMO2) linkage. The segment at 145–167 (YIGNECGKAFRVSSSLINHQMIH) adopts a C2H2-type 1; degenerate zinc-finger fold. A C2H2-type 2; degenerate zinc finger spans residues 173–195 (YRCNESGKAFHRGSLLTVHQIVH). 13 C2H2-type zinc fingers span residues 201 to 223 (YQCDVCGRIFRQNSDLVNHRRSH), 229 to 251 (YICNECGKSFSKSSHLAVHQRIH), 257 to 279 (YKCNRCGKCFSQSSSLATHQTVH), 285 to 307 (YKCNECGKTFKRNSSLTAHHIIH), 313 to 335 (YTCDVCGKVFYQNSQLVRHQIIH), 341 to 363 (YKCNECGKVFFQRSRLAGHRRIH), 369 to 391 (YKCNECGKVFSQHSHLAVHQRVH), 397 to 419 (YKCNECGKAFNWGSLLTVHQRIH), 425 to 447 (YKCNVCGKVFNYGGYLSVHMRCH), 453 to 475 (LHCNKCGMVFTYYSCLARHQRMH), 481 to 503 (YKCNVCGKVFIDSGNLSIHRRSH), 509 to 531 (FQCNECGKVFSYYSCLARHRKIH), and 537 to 559 (YKCNDCGKAYTQRSSLTKHLVIH). Residues lysine 554 and lysine 579 each participate in a glycyl lysine isopeptide (Lys-Gly) (interchain with G-Cter in SUMO2) cross-link. Residues 565–587 (YHCNEFGEAFIQSSKLARYHRNP) form a C2H2-type 16; degenerate zinc finger. 7 consecutive C2H2-type zinc fingers follow at residues 593–615 (HKCSECGRTFSHKTSLVYHQRRH), 621–643 (YKCIECGKVFNSTTTLARHRRIH), 649–671 (YKCNECGKVFRYRSGLARHWSIH), 677–699 (YKCNECGKAFRVRSILLNHQMMH), 705–727 (YKCNECGKAFIERSNLVYHQRNH), 733–755 (YKCMECGKAFGRRSCLTKHQRIH), and 761–783 (YKCNECGKSYISRSGLTKHQIKH). Lysine 791 participates in a covalent cross-link: Glycyl lysine isopeptide (Lys-Gly) (interchain with G-Cter in SUMO2).

The protein belongs to the krueppel C2H2-type zinc-finger protein family.

The protein localises to the nucleus. In terms of biological role, may be involved in transcriptional regulation. The sequence is that of Zinc finger protein 841 (ZNF841) from Homo sapiens (Human).